Here is a 217-residue protein sequence, read N- to C-terminus: Pyridoxine/pyridoxamine 5'-phosphate oxidase (217 aa).

Substrate contacts are provided by residues 13-16 (RREY) and Lys-71. Residues 66–71 (RIVLLK), 81–82 (YT), Arg-87, Lys-88, and Gln-110 each bind FMN. Substrate-binding residues include Tyr-128, Arg-132, and Ser-136. FMN contacts are provided by residues 145 to 146 (QS) and Trp-190. 196-198 (RLH) provides a ligand contact to substrate. Arg-200 serves as a coordination point for FMN.

It belongs to the pyridoxamine 5'-phosphate oxidase family. Homodimer. FMN serves as cofactor.

It catalyses the reaction pyridoxamine 5'-phosphate + O2 + H2O = pyridoxal 5'-phosphate + H2O2 + NH4(+). The enzyme catalyses pyridoxine 5'-phosphate + O2 = pyridoxal 5'-phosphate + H2O2. The protein operates within cofactor metabolism; pyridoxal 5'-phosphate salvage; pyridoxal 5'-phosphate from pyridoxamine 5'-phosphate: step 1/1. It participates in cofactor metabolism; pyridoxal 5'-phosphate salvage; pyridoxal 5'-phosphate from pyridoxine 5'-phosphate: step 1/1. In terms of biological role, catalyzes the oxidation of either pyridoxine 5'-phosphate (PNP) or pyridoxamine 5'-phosphate (PMP) into pyridoxal 5'-phosphate (PLP). This Serratia proteamaculans (strain 568) protein is Pyridoxine/pyridoxamine 5'-phosphate oxidase.